The chain runs to 431 residues: Fumarylacetoacetase fahA (431 aa).

Position 133 (Asp133) interacts with Ca(2+). Substrate is bound at residue Tyr135. His140 serves as the catalytic Proton acceptor. Arg149 provides a ligand contact to substrate. Ca(2+) contacts are provided by Glu209, Glu211, and Asp243. Asp243 lines the Mg(2+) pocket. Substrate is bound by residues Gln250 and Tyr254. The Mg(2+) site is built by Lys263 and Thr267. Position 362 (Thr362) interacts with substrate. The segment covering 362–381 (TISGKENQTQGSLLEQTNGK) has biased composition (polar residues). Residues 362–382 (TISGKENQTQGSLLEQTNGKN) are disordered.

Belongs to the FAH family. The cofactor is Ca(2+). Mg(2+) is required as a cofactor.

It catalyses the reaction 4-fumarylacetoacetate + H2O = acetoacetate + fumarate + H(+). It participates in amino-acid degradation; L-phenylalanine degradation; acetoacetate and fumarate from L-phenylalanine: step 6/6. In terms of biological role, fumarylacetoacetase; part of the L-tyrosine degradation gene cluster that mediates the biosynthesis of the brownish pigment pyomelanin as an alternative melanin. The 4-hydroxyphenylpyruvate dioxygenase hppD catalyzes the conversion of 4-hydroxyphenylpyruvate to homogentisic acid (HGA). The protein hmgX is crucial for this conversion and thus, probably functions as an accessory factor to mediate specific activity of hppD. The homogentisate 1,2-dioxygenase hmgA is then involved in the cleavage of the aromatic ring of HGA and its conversion to 4-maleylacetoacetate. When hmgA activity is lowered by the cell wall integrity (CWI) signaling pathway, HGA accumulates and leads to the production of pyomelanin through benzoquinone acetic acid after oxidation and polymerization. On the opposite, in non-stress conditions, both hppD and hmgA activities are balanced and HGA is degraded into 4-maleylacetoacetate. 4-maleylacetoacetate is further converted to 4-fumarylacetoacetate by the maleylacetoacetate isomerase maiA, which is degraded into fumarate and acetoacetate by the fumarylacetoacetase fahA. The polypeptide is Fumarylacetoacetase fahA (Aspergillus fumigatus (strain ATCC MYA-4609 / CBS 101355 / FGSC A1100 / Af293) (Neosartorya fumigata)).